The following is a 671-amino-acid chain: MIRRQKNKKFELVSKFQPAGDQEQAIKKLTDGFEQGEKAQILEGATGTGKTFTMANVIAKLNKPTLVISHNKTLVGQLYGEFKEFFPKNAVDYFVSYYDYYQPEAYVPQSDTYIEKDSSINDEIDQLRHKTTSDLMSRNDVIVVASVSCIYGLGDPREYAASVVSLSEGQEISRDVLLRDLVNIQYDRNDIDFQRGRFRVRGDVVEIFPAGYSDHAFRVEFFGDEIDRIVEVDSLTGEVIGEREQVSIFPATHFVTNEQIMERALASIKDEMNIQVKKFEGEGKLLEAQRIKQRTTYDMEMMSEVGYTNGIENYSRHMEGRKAGQPPHTLLDFFPDDFLILIDESHATMPELKAMYNGDRARKQTLIDYGFRLPSALDNRPLKLEEFEKHVNQIMYVSATPGDYELNQTDHKVEQIIRPTGLLDPEIEVRPIKGQIDDLVGEVNKRIERNERVFVTTLTKKMAEDLTDYLKDLGIKVRYLHSDIKTLERLEIIRDLRLGKFDVLIGINLLREGIDVPEVSLVAILDADKEGFLRSTRPLVQTIGRAARNSNGKVIMYADSITDSMREAIDATERRRSLQMKFNKEHGITPKTIVKPIRDVISITKDSEDKENKESFADLNFDELTKKQKQNMIKTLTAQMQEAAKKLDFEEAANLRDAIMDLKKQVHEKKK.

Residues 31 to 414 enclose the Helicase ATP-binding domain; sequence DGFEQGEKAQ…ELNQTDHKVE (384 aa). 44–51 lines the ATP pocket; that stretch reads GATGTGKT. A Beta-hairpin motif is present at residues 97–120; it reads YYDYYQPEAYVPQSDTYIEKDSSI. The region spanning 435 to 601 is the Helicase C-terminal domain; sequence QIDDLVGEVN…TIVKPIRDVI (167 aa). One can recognise a UVR domain in the interval 630 to 665; it reads QNMIKTLTAQMQEAAKKLDFEEAANLRDAIMDLKKQ.

The protein belongs to the UvrB family. In terms of assembly, forms a heterotetramer with UvrA during the search for lesions. Interacts with UvrC in an incision complex.

The protein localises to the cytoplasm. In terms of biological role, the UvrABC repair system catalyzes the recognition and processing of DNA lesions. A damage recognition complex composed of 2 UvrA and 2 UvrB subunits scans DNA for abnormalities. Upon binding of the UvrA(2)B(2) complex to a putative damaged site, the DNA wraps around one UvrB monomer. DNA wrap is dependent on ATP binding by UvrB and probably causes local melting of the DNA helix, facilitating insertion of UvrB beta-hairpin between the DNA strands. Then UvrB probes one DNA strand for the presence of a lesion. If a lesion is found the UvrA subunits dissociate and the UvrB-DNA preincision complex is formed. This complex is subsequently bound by UvrC and the second UvrB is released. If no lesion is found, the DNA wraps around the other UvrB subunit that will check the other stand for damage. This is UvrABC system protein B from Lactobacillus johnsonii (strain CNCM I-12250 / La1 / NCC 533).